A 276-amino-acid chain; its full sequence is Probable endonuclease 4 (276 aa).

Zn(2+) contacts are provided by His70, His108, Glu143, Asp176, His179, His210, Asp223, His225, and Glu255.

It belongs to the AP endonuclease 2 family. Zn(2+) is required as a cofactor.

The enzyme catalyses Endonucleolytic cleavage to 5'-phosphooligonucleotide end-products.. Endonuclease IV plays a role in DNA repair. It cleaves phosphodiester bonds at apurinic or apyrimidinic (AP) sites, generating a 3'-hydroxyl group and a 5'-terminal sugar phosphate. The chain is Probable endonuclease 4 from Mesomycoplasma hyopneumoniae (strain J / ATCC 25934 / NCTC 10110) (Mycoplasma hyopneumoniae).